The following is a 397-amino-acid chain: Elongation factor Tu (397 aa).

The tr-type G domain maps to 10–207 (KPHVNIGTIG…ACDSYIPEPE (198 aa)). Positions 19–26 (GHIDHGKT) are G1. 19–26 (GHIDHGKT) lines the GTP pocket. Mg(2+) is bound at residue threonine 26. The interval 60 to 64 (GITIA) is G2. Positions 81-84 (DCPG) are G3. Residues 81–85 (DCPGH) and 136–139 (NKCD) each bind GTP. Residues 136–139 (NKCD) form a G4 region. A G5 region spans residues 174-176 (SAL).

It belongs to the TRAFAC class translation factor GTPase superfamily. Classic translation factor GTPase family. EF-Tu/EF-1A subfamily. In terms of assembly, monomer.

Its subcellular location is the cytoplasm. The enzyme catalyses GTP + H2O = GDP + phosphate + H(+). Functionally, GTP hydrolase that promotes the GTP-dependent binding of aminoacyl-tRNA to the A-site of ribosomes during protein biosynthesis. In Oleidesulfovibrio alaskensis (strain ATCC BAA-1058 / DSM 17464 / G20) (Desulfovibrio alaskensis), this protein is Elongation factor Tu.